Consider the following 302-residue polypeptide: N-acetylmuramic acid 6-phosphate etherase (302 aa).

One can recognise an SIS domain in the interval 58–221; the sequence is IGESFLNGGR…STGAMVKTGK (164 aa). The active-site Proton donor is Glu86. Residue Glu117 is part of the active site.

This sequence belongs to the GCKR-like family. MurNAc-6-P etherase subfamily. Homodimer.

It catalyses the reaction N-acetyl-D-muramate 6-phosphate + H2O = N-acetyl-D-glucosamine 6-phosphate + (R)-lactate. It participates in amino-sugar metabolism; N-acetylmuramate degradation. Its function is as follows. Specifically catalyzes the cleavage of the D-lactyl ether substituent of MurNAc 6-phosphate, producing GlcNAc 6-phosphate and D-lactate. This chain is N-acetylmuramic acid 6-phosphate etherase, found in Clostridium botulinum (strain Langeland / NCTC 10281 / Type F).